Here is a 106-residue protein sequence, read N- to C-terminus: uncharacterized protein (106 aa).

The HTH hxlR-type domain maps to 1-93 (MSIFYVLGKK…WEAKWKEAKI (93 aa)).

This is an uncharacterized protein from Methanocaldococcus jannaschii (strain ATCC 43067 / DSM 2661 / JAL-1 / JCM 10045 / NBRC 100440) (Methanococcus jannaschii).